We begin with the raw amino-acid sequence, 68 residues long: Large ribosomal subunit protein uL29 (68 aa).

The protein belongs to the universal ribosomal protein uL29 family.

In Chloroflexus aurantiacus (strain ATCC 29364 / DSM 637 / Y-400-fl), this protein is Large ribosomal subunit protein uL29.